Consider the following 244-residue polypeptide: Type III pantothenate kinase (244 aa).

ATP is bound at residue 6-13 (DVGNTRIK). Residues tyrosine 87 and 94–97 (GIDR) contribute to the substrate site. The active-site Proton acceptor is aspartate 96. Aspartate 117 is a K(+) binding site. Threonine 120 provides a ligand contact to ATP. Residue threonine 172 coordinates substrate.

This sequence belongs to the type III pantothenate kinase family. As to quaternary structure, homodimer. Requires NH4(+) as cofactor. It depends on K(+) as a cofactor.

It localises to the cytoplasm. It catalyses the reaction (R)-pantothenate + ATP = (R)-4'-phosphopantothenate + ADP + H(+). It functions in the pathway cofactor biosynthesis; coenzyme A biosynthesis; CoA from (R)-pantothenate: step 1/5. Functionally, catalyzes the phosphorylation of pantothenate (Pan), the first step in CoA biosynthesis. The protein is Type III pantothenate kinase of Flavobacterium johnsoniae (strain ATCC 17061 / DSM 2064 / JCM 8514 / BCRC 14874 / CCUG 350202 / NBRC 14942 / NCIMB 11054 / UW101) (Cytophaga johnsonae).